A 388-amino-acid chain; its full sequence is MARPTNSAASDVIPPSSKTRMPKIKPFKTIRTTFLKKKNTIGNLVSKGTHSSQSGGHKDSYMGDVESLTLRSPQSRGSWVESIDSKKIHSLSNDRVTLFRYEHVRVTSYQSVRKKYRNSGDSRRGQERMESAVKGTDVLRRERASVIEPRGPLEIYQIITPISKEPSQKVTYLCLGRKEQIIKPILPKLRITMLTREGLQFSVLSFNPENSWKIEFLGALGDSAVPCNVILAFENAVKNICRYTSELNNDPIEEVGTEDDDDLEYLLYSDFAEDDDTGSDITLNREHSSEPSDLLNCSTTNEMINDAFRKAIEHIRHVGSMPLIEAHGVKSFSSQLKIDGEQVDPPPKASPRQRAVSVPVETRTWSKLSTHPVALSTWMDIEYDDIKE.

The tract at residues 1–25 (MARPTNSAASDVIPPSSKTRMPKIK) is disordered.

Belongs to the INP1 family.

The protein localises to the peroxisome membrane. In terms of biological role, required for peroxisome inheritance. This is Inheritance of peroxisomes protein 1 (INP1) from Eremothecium gossypii (strain ATCC 10895 / CBS 109.51 / FGSC 9923 / NRRL Y-1056) (Yeast).